Here is a 244-residue protein sequence, read N- to C-terminus: MSFTVYPALDIRNGRVVRLLQGDYARETQYGDDVLPRAQAFADAGAQWMHLVDLDAAKAGGYTLAGTLGEIARATGLRVQTGGGVRSREDVARILDAGAARVVIGSLAVRNSEMVVGWLQEFGADRLTIALDTRQDANGIWQLPVHGWTETADATLDQLAVRYAQSGLQHLLCTDIARDGMLSGPNMALYAHLRALTPQLQVQVSGGARNLADVAAAKAAGCAGIVLGKALLEGHLHLEEALAC.

Aspartate 10 serves as the catalytic Proton acceptor. The active-site Proton donor is aspartate 132.

It belongs to the HisA/HisF family.

The protein localises to the cytoplasm. It carries out the reaction 1-(5-phospho-beta-D-ribosyl)-5-[(5-phospho-beta-D-ribosylamino)methylideneamino]imidazole-4-carboxamide = 5-[(5-phospho-1-deoxy-D-ribulos-1-ylimino)methylamino]-1-(5-phospho-beta-D-ribosyl)imidazole-4-carboxamide. It functions in the pathway amino-acid biosynthesis; L-histidine biosynthesis; L-histidine from 5-phospho-alpha-D-ribose 1-diphosphate: step 4/9. In Xanthomonas euvesicatoria pv. vesicatoria (strain 85-10) (Xanthomonas campestris pv. vesicatoria), this protein is 1-(5-phosphoribosyl)-5-[(5-phosphoribosylamino)methylideneamino] imidazole-4-carboxamide isomerase.